A 51-amino-acid polypeptide reads, in one-letter code: uncharacterized protein (51 aa).

A helical transmembrane segment spans residues 20 to 42 (NFFSRMWNAVVFGFGAAIGASVA).

It localises to the membrane. This is an uncharacterized protein from Schizosaccharomyces pombe (strain 972 / ATCC 24843) (Fission yeast).